A 544-amino-acid chain; its full sequence is Chaperonin GroEL (544 aa).

ATP contacts are provided by residues T30 to P33, K51, D87 to T91, G415, and D495.

The protein belongs to the chaperonin (HSP60) family. Forms a cylinder of 14 subunits composed of two heptameric rings stacked back-to-back. Interacts with the co-chaperonin GroES.

It localises to the cytoplasm. The catalysed reaction is ATP + H2O + a folded polypeptide = ADP + phosphate + an unfolded polypeptide.. In terms of biological role, together with its co-chaperonin GroES, plays an essential role in assisting protein folding. The GroEL-GroES system forms a nano-cage that allows encapsulation of the non-native substrate proteins and provides a physical environment optimized to promote and accelerate protein folding. The polypeptide is Chaperonin GroEL (Bartonella bacilliformis).